The primary structure comprises 206 residues: Ribosomal RNA large subunit methyltransferase E (206 aa).

Positions 63, 65, 83, 99, and 124 each coordinate S-adenosyl-L-methionine. Lys164 (proton acceptor) is an active-site residue.

Belongs to the class I-like SAM-binding methyltransferase superfamily. RNA methyltransferase RlmE family.

The protein localises to the cytoplasm. It catalyses the reaction uridine(2552) in 23S rRNA + S-adenosyl-L-methionine = 2'-O-methyluridine(2552) in 23S rRNA + S-adenosyl-L-homocysteine + H(+). Functionally, specifically methylates the uridine in position 2552 of 23S rRNA at the 2'-O position of the ribose in the fully assembled 50S ribosomal subunit. This is Ribosomal RNA large subunit methyltransferase E from Buchnera aphidicola subsp. Schizaphis graminum (strain Sg).